The primary structure comprises 457 residues: Transcription factor CP2-like protein 1 (457 aa).

Residues 1–52 (MLFWHTQPEHYNQHNSGSYLRDVLALPIFKQEEPQLSPENEARLPPLQYVLC) are mediate transcriptional repression. A Grh/CP2 DB domain is found at 43 to 280 (RLPPLQYVLC…PSPSYNGSPN (238 aa)). 2 disordered regions span residues 219 to 245 (KPKG…KEKY) and 271 to 301 (PSPS…LPVG). The segment covering 221 to 245 (KGADRKQETDREKMEKRTAQEKEKY) has biased composition (basic and acidic residues). The tract at residues 261-365 (PDVAYQVNSA…IRLFNAIKGR (105 aa)) is SAM2-like domain. Residues 271–281 (PSPSYNGSPNS) show a composition bias toward polar residues.

This sequence belongs to the grh/CP2 family. CP2 subfamily. Forms homohexamers via its SAM-like domain. Interacts with MTA1; which is indispensable for TFCP2L1-mediated self-renewal-promoting effect and endoderm-inhibiting action.

Its subcellular location is the nucleus. Functionally, transcription factor that facilitates establishment and maintenance of pluripotency in embryonic stem cells (ESCs). With KLF2, acts as the major effector of self-renewal that mediates induction of pluripotency downstream of LIF/STAT3 and Wnt/beta-catenin signaling. Required for normal duct development in the salivary gland and kidney. Coordinates the development of the kidney collecting ducts intercalated (IC) and principal (PC) cells, which regulate acid-base and salt-water homeostasis, respectively. Regulates the expression of IC genes including subunits B1 and D2 of the V-ATPase complex, OXGR1, CA12, SLC4A1, AQP6 and IC-specific transcription factor FOXI1. Also regulates the expression of JAG1 and subsequent notch signaling in the collecting duct. JAG1 initiates notch signaling in PCs but inhibits notch signaling in ICs. Acts as a transcriptional suppressor that may suppress UBP1-mediated transcriptional activation. Modulates the placental expression of CYP11A1. The polypeptide is Transcription factor CP2-like protein 1 (TFCP2L1) (Pongo abelii (Sumatran orangutan)).